Reading from the N-terminus, the 123-residue chain is Beta-defensin 126 (123 aa).

A signal peptide spans 1–20 (MKSLLFTLAVFMLLAQLVSG). The segment at 21 to 63 (NLYVKRCLNDIGICKKTCKPEEVRSEHGWVMCGKRKACCVPAD) is in vitro binds to LPS, mediates antimicrobial activity and inhibits LPS-mediated inflammation. 3 disulfide bridges follow: Cys27–Cys58, Cys34–Cys52, and Cys38–Cys59.

Belongs to the beta-defensin family. In terms of assembly, homodimer or homooligomer; disulfide-linked. O-glycosylated; glycans contain sialic acids alpha(2,3)-linked to galactose and N-acetylgalactosamine. The C-terminal O-glycosylation contributes substantially to the sperm glyocalyx. As to expression, high-level and epididymis-specific expression. Detected in epithelial cells lining the efferent ductules, initial segment, and cauda regions of the epididymis, but not on spermatozoa.

The protein resides in the secreted. Highly glycosylated atypical beta-defensin involved in several aspects of sperm function. Facilitates sperm transport in the female reproductive tract and contributes to sperm protection against immunodetection; both functions are probably implicating the negative surface charge provided by its O-linked oligosaccharides in the sperm glycocalyx. Involved in binding of sperm to oviductal epithelial cells to form a sperm reservoir until ovulation. Release from the sperm surface during capacitation and ovaluation by an elevation of oviductal fluid pH is unmasking other surface components and allows sperm to penetrate the cumulus matrix and bind to the zona pellucida of the oocyte. In vitro has antimicrobial activity and may inhibit LPS-mediated inflammation. This chain is Beta-defensin 126 (DEFB126), found in Macaca fascicularis (Crab-eating macaque).